The primary structure comprises 427 residues: tRNA(Ile)-lysidine synthase (427 aa).

An ATP-binding site is contributed by 25-30; it reads SGGLDS.

The protein belongs to the tRNA(Ile)-lysidine synthase family.

The protein resides in the cytoplasm. It carries out the reaction cytidine(34) in tRNA(Ile2) + L-lysine + ATP = lysidine(34) in tRNA(Ile2) + AMP + diphosphate + H(+). Its function is as follows. Ligates lysine onto the cytidine present at position 34 of the AUA codon-specific tRNA(Ile) that contains the anticodon CAU, in an ATP-dependent manner. Cytidine is converted to lysidine, thus changing the amino acid specificity of the tRNA from methionine to isoleucine. The protein is tRNA(Ile)-lysidine synthase of Histophilus somni (strain 2336) (Haemophilus somnus).